Here is a 240-residue protein sequence, read N- to C-terminus: Uridylate kinase (240 aa).

ATP is bound at residue 13 to 16; it reads KASG. The interval 21–26 is involved in allosteric activation by GTP; sequence GSQGFG. G55 contacts UMP. 2 residues coordinate ATP: G56 and R60. UMP contacts are provided by residues D75 and 136–143; that span reads TGNPFFTT. The ATP site is built by T163, Q164, Y169, and D172.

Belongs to the UMP kinase family. Homohexamer.

It localises to the cytoplasm. The catalysed reaction is UMP + ATP = UDP + ADP. It participates in pyrimidine metabolism; CTP biosynthesis via de novo pathway; UDP from UMP (UMPK route): step 1/1. Its activity is regulated as follows. Allosterically activated by GTP. Inhibited by UTP. Its function is as follows. Catalyzes the reversible phosphorylation of UMP to UDP. In Brucella anthropi (strain ATCC 49188 / DSM 6882 / CCUG 24695 / JCM 21032 / LMG 3331 / NBRC 15819 / NCTC 12168 / Alc 37) (Ochrobactrum anthropi), this protein is Uridylate kinase.